Reading from the N-terminus, the 323-residue chain is tRNA U34 carboxymethyltransferase (323 aa).

Residues lysine 91, tryptophan 105, lysine 110, glycine 130, 152–154 (DPT), 181–182 (IE), methionine 196, tyrosine 200, and arginine 315 contribute to the carboxy-S-adenosyl-L-methionine site.

This sequence belongs to the class I-like SAM-binding methyltransferase superfamily. CmoB family. In terms of assembly, homotetramer.

It carries out the reaction carboxy-S-adenosyl-L-methionine + 5-hydroxyuridine(34) in tRNA = 5-carboxymethoxyuridine(34) in tRNA + S-adenosyl-L-homocysteine + H(+). In terms of biological role, catalyzes carboxymethyl transfer from carboxy-S-adenosyl-L-methionine (Cx-SAM) to 5-hydroxyuridine (ho5U) to form 5-carboxymethoxyuridine (cmo5U) at position 34 in tRNAs. In Salmonella typhi, this protein is tRNA U34 carboxymethyltransferase.